Reading from the N-terminus, the 62-residue chain is Large ribosomal subunit protein bL35 (62 aa).

The disordered stretch occupies residues 31 to 62 (HLAQNKTTKQKRQSRKSAQMHSSDLKRFKALI). Positions 53-62 (SDLKRFKALI) are enriched in basic and acidic residues.

This sequence belongs to the bacterial ribosomal protein bL35 family.

This Mycoplasmopsis agalactiae (strain NCTC 10123 / CIP 59.7 / PG2) (Mycoplasma agalactiae) protein is Large ribosomal subunit protein bL35.